Reading from the N-terminus, the 262-residue chain is Probable DNA polymerase sliding clamp 1 (262 aa).

A DNA-binding region spans residues 67 to 86 (KCEHTYELGVNVLNMFKLLR).

This sequence belongs to the PCNA family.

Sliding clamp subunit. Responsible for tethering the catalytic subunit of DNA polymerase to DNA during high-speed replication. The sequence is that of Probable DNA polymerase sliding clamp 1 from Chlorella (PBCV-1).